Consider the following 494-residue polypeptide: UDP-glucose 6-dehydrogenase (494 aa).

NAD(+) is bound by residues G11–G16, D36, R41, V89–T93, and S130–V132. Residues S88–E110 form a disordered region. An allosteric switch region region spans residues K129 to R135. Catalysis depends on E161, which acts as the Proton donor/acceptor. Substrate is bound by residues E161–E165, K220–N224, R260, and K267–G273. E165 provides a ligand contact to NAD(+). K220 acts as the Proton donor/acceptor in catalysis. Catalysis depends on C276, which acts as the Nucleophile. Residue C276–K279 coordinates NAD(+). The important for formation of active hexamer structure stretch occupies residues S321–T325. Residue F338–K339 coordinates substrate. NAD(+) is bound at residue R346. Residue R442 coordinates substrate. The disordered stretch occupies residues V466–V494.

This sequence belongs to the UDP-glucose/GDP-mannose dehydrogenase family. As to quaternary structure, homohexamer.

The catalysed reaction is UDP-alpha-D-glucose + 2 NAD(+) + H2O = UDP-alpha-D-glucuronate + 2 NADH + 3 H(+). It participates in nucleotide-sugar biosynthesis; UDP-alpha-D-glucuronate biosynthesis; UDP-alpha-D-glucuronate from UDP-alpha-D-glucose: step 1/1. Its activity is regulated as follows. UDP-alpha-D-xylose (UDX) acts as a feedback inhibitor. It binds at the same site as the substrate, but functions as allosteric inhibitor by triggering a conformation change that disrupts the active hexameric ring structure and gives rise to an inactive, horseshoe-shaped hexamer. Its function is as follows. Catalyzes the formation of UDP-alpha-D-glucuronate, a constituent of complex glycosaminoglycans. Required for the biosynthesis of chondroitin sulfate and heparan sulfate. Required for embryonic development via its role in the biosynthesis of glycosaminoglycans. In Gallus gallus (Chicken), this protein is UDP-glucose 6-dehydrogenase (UGDH).